The chain runs to 366 residues: tRNA/tmRNA (uracil-C(5))-methyltransferase (366 aa).

5 residues coordinate S-adenosyl-L-methionine: Q189, Y217, N222, E238, and D298. C323 functions as the Nucleophile in the catalytic mechanism. Residue E357 is the Proton acceptor of the active site.

It belongs to the class I-like SAM-binding methyltransferase superfamily. RNA M5U methyltransferase family. TrmA subfamily.

It catalyses the reaction uridine(54) in tRNA + S-adenosyl-L-methionine = 5-methyluridine(54) in tRNA + S-adenosyl-L-homocysteine + H(+). The catalysed reaction is uridine(341) in tmRNA + S-adenosyl-L-methionine = 5-methyluridine(341) in tmRNA + S-adenosyl-L-homocysteine + H(+). In terms of biological role, dual-specificity methyltransferase that catalyzes the formation of 5-methyluridine at position 54 (m5U54) in all tRNAs, and that of position 341 (m5U341) in tmRNA (transfer-mRNA). This Shewanella putrefaciens (strain CN-32 / ATCC BAA-453) protein is tRNA/tmRNA (uracil-C(5))-methyltransferase.